Consider the following 126-residue polypeptide: Aspartate 1-decarboxylase (126 aa).

Ser25 (schiff-base intermediate with substrate; via pyruvic acid) is an active-site residue. Ser25 carries the post-translational modification Pyruvic acid (Ser). Thr57 is a binding site for substrate. The active-site Proton donor is the Tyr58. Residue 73-75 (GAA) coordinates substrate.

The protein belongs to the PanD family. As to quaternary structure, heterooctamer of four alpha and four beta subunits. It depends on pyruvate as a cofactor. Is synthesized initially as an inactive proenzyme, which is activated by self-cleavage at a specific serine bond to produce a beta-subunit with a hydroxyl group at its C-terminus and an alpha-subunit with a pyruvoyl group at its N-terminus.

Its subcellular location is the cytoplasm. It catalyses the reaction L-aspartate + H(+) = beta-alanine + CO2. It participates in cofactor biosynthesis; (R)-pantothenate biosynthesis; beta-alanine from L-aspartate: step 1/1. Functionally, catalyzes the pyruvoyl-dependent decarboxylation of aspartate to produce beta-alanine. This chain is Aspartate 1-decarboxylase, found in Methylobacillus flagellatus (strain ATCC 51484 / DSM 6875 / VKM B-1610 / KT).